The primary structure comprises 339 residues: 5-dehydro-2-deoxygluconokinase (339 aa).

This sequence belongs to the carbohydrate kinase PfkB family.

It catalyses the reaction 5-dehydro-2-deoxy-D-gluconate + ATP = 6-phospho-5-dehydro-2-deoxy-D-gluconate + ADP + H(+). The protein operates within polyol metabolism; myo-inositol degradation into acetyl-CoA; acetyl-CoA from myo-inositol: step 5/7. In terms of biological role, catalyzes the phosphorylation of 5-dehydro-2-deoxy-D-gluconate (2-deoxy-5-keto-D-gluconate or DKG) to 6-phospho-5-dehydro-2-deoxy-D-gluconate (DKGP). This chain is 5-dehydro-2-deoxygluconokinase, found in Clostridium botulinum (strain Alaska E43 / Type E3).